Consider the following 439-residue polypeptide: Proline--tRNA ligase (439 aa).

It belongs to the class-II aminoacyl-tRNA synthetase family. ProS type 2 subfamily. As to quaternary structure, homodimer.

It is found in the cytoplasm. It catalyses the reaction tRNA(Pro) + L-proline + ATP = L-prolyl-tRNA(Pro) + AMP + diphosphate. Catalyzes the attachment of proline to tRNA(Pro) in a two-step reaction: proline is first activated by ATP to form Pro-AMP and then transferred to the acceptor end of tRNA(Pro). This Phenylobacterium zucineum (strain HLK1) protein is Proline--tRNA ligase.